The chain runs to 495 residues: Protein YhjJ (495 aa).

Positions 1–24 are cleaved as a signal peptide; that stretch reads MQGTKIRLLAGSLLMLASAGYVQA.

Belongs to the peptidase M16 family.

It is found in the periplasm. This Salmonella typhi protein is Protein YhjJ (yhjJ).